Here is a 62-residue protein sequence, read N- to C-terminus: Keratin-associated protein 19-5 (62 aa).

The segment at 5-56 is 14 X 2 AA repeats of G-[YCGS]; that stretch reads GSYYGGLGSGIRGFGNLGYGYGCGCGFGGYGYGSGYGRYGYGYPRPLYYGGY.

Belongs to the KRTAP type 19 family. As to quaternary structure, interacts with hair keratins. In terms of tissue distribution, expressed in skin during two hair growth cycles. Expression restricted to the cortical cells of hair follicles, appearing first in the cortical cells processing the flat nuclei located a few cells above the dermal papilla.

In the hair cortex, hair keratin intermediate filaments are embedded in an interfilamentous matrix, consisting of hair keratin-associated proteins (KRTAP), which are essential for the formation of a rigid and resistant hair shaft through their extensive disulfide bond cross-linking with abundant cysteine residues of hair keratins. The matrix proteins include the high-sulfur and high-glycine-tyrosine keratins. This chain is Keratin-associated protein 19-5 (Krtap19-5), found in Mus musculus (Mouse).